Reading from the N-terminus, the 1502-residue chain is Ras guanine nucleotide exchange factor P (1502 aa).

One can recognise a Calponin-homology (CH) domain in the interval 84-187 (FIIDNQVLDW…LLYSLMKFSE (104 aa)). Disordered stretches follow at residues 216–242 (AQSSSSSPTTSTSASTSTSTSPSSSNE), 325–436 (QQQQ…PNNN), 456–534 (EDNT…VGRG), and 589–935 (TTTA…NQNN). 4 stretches are compositionally biased toward low complexity: residues 218–242 (SSSSSPTTSTSASTSTSTSPSSSNE), 325–345 (QQQQPPPQTSTCTTTQPTTTT), 371–400 (TTSSIIKKAAPAPLKKPSPANTSSNSLLNH), and 407–421 (SSSTASSAINTPIST). The stretch at 287–328 (QQQQQQQQQQQQQQQQQQQQQQQQQQQQQQQQQQQQQQQQQQ) forms a coiled coil. Positions 422 to 436 (PSTSKSNSFQKPNNN) are enriched in polar residues. Residues 451-515 (EENEIEDNTN…NQNENEDEVK (65 aa)) adopt a coiled-coil conformation. Positions 458-508 (NTNNNNNNNNNNNNNNNNNNNNNNNNNNNNNNNNTNDNINNNNKNNNNNQN) are enriched in low complexity. Pro residues predominate over residues 518–528 (HSPPKVRPPLP). Low complexity-rich tracts occupy residues 589 to 646 (TTTA…NNNN), 663 to 675 (TISTSSPSTTGTI), 686 to 719 (SQPLNNNNNINNENNNSNNSNSLVTSSSPPLSLP), 764 to 790 (NSINQPPSNSSPKQSPVPNNPPSVSQS), and 813 to 853 (NSNS…NNNN). Polar residues predominate over residues 861 to 876 (LTMSNQSANSLKSSGN). Residues 883–935 (TNGNNNISQNQNQNQNQNQNQTQNQNQNQNQNHISHSNSISSGNLNNHVNQNN) show a composition bias toward low complexity. Positions 1032–1076 (VEENKNLITRTEEMQKMIDSLMKEKKELINEKNTLASMLAKTKQQ) form a coiled coil. The 148-residue stretch at 1102–1249 (GKYEIKGGTT…SELKLVFSTP (148 aa)) folds into the N-terminal Ras-GEF domain. Residues 1267 to 1498 (DPAEIARQLT…FNLSLICEPR (232 aa)) form the Ras-GEF domain.

In terms of biological role, promotes the exchange of Ras-bound GDP by GTP. The polypeptide is Ras guanine nucleotide exchange factor P (gefP) (Dictyostelium discoideum (Social amoeba)).